The primary structure comprises 330 residues: Beta-ketoacyl-[acyl-carrier-protein] synthase III (330 aa).

Active-site residues include C114 and H254. Residues 255-259 (QANLR) form an ACP-binding region. Residue N284 is part of the active site.

It belongs to the thiolase-like superfamily. FabH family. As to quaternary structure, homodimer.

The protein localises to the cytoplasm. It catalyses the reaction malonyl-[ACP] + acetyl-CoA + H(+) = 3-oxobutanoyl-[ACP] + CO2 + CoA. It functions in the pathway lipid metabolism; fatty acid biosynthesis. In terms of biological role, catalyzes the condensation reaction of fatty acid synthesis by the addition to an acyl acceptor of two carbons from malonyl-ACP. Catalyzes the first condensation reaction which initiates fatty acid synthesis and may therefore play a role in governing the total rate of fatty acid production. Possesses both acetoacetyl-ACP synthase and acetyl transacylase activities. Its substrate specificity determines the biosynthesis of branched-chain and/or straight-chain of fatty acids. The chain is Beta-ketoacyl-[acyl-carrier-protein] synthase III from Roseiflexus castenholzii (strain DSM 13941 / HLO8).